The following is a 546-amino-acid chain: Chaperonin GroEL (546 aa).

Residues 30-33, lysine 51, 87-91, glycine 415, and aspartate 497 contribute to the ATP site; these read TLGP and DGTTT. The disordered stretch occupies residues 527–546; the sequence is PKKDSPAPAMPGGGMGGMDF. Over residues 537–546 the composition is skewed to gly residues; the sequence is PGGGMGGMDF.

The protein belongs to the chaperonin (HSP60) family. Forms a cylinder of 14 subunits composed of two heptameric rings stacked back-to-back. Interacts with the co-chaperonin GroES.

It localises to the cytoplasm. The catalysed reaction is ATP + H2O + a folded polypeptide = ADP + phosphate + an unfolded polypeptide.. In terms of biological role, together with its co-chaperonin GroES, plays an essential role in assisting protein folding. The GroEL-GroES system forms a nano-cage that allows encapsulation of the non-native substrate proteins and provides a physical environment optimized to promote and accelerate protein folding. The sequence is that of Chaperonin GroEL from Methylorubrum populi (strain ATCC BAA-705 / NCIMB 13946 / BJ001) (Methylobacterium populi).